Here is a 399-residue protein sequence, read N- to C-terminus: Elongation factor Tu (399 aa).

The tr-type G domain maps to 10-204; it reads KPHVNIGTIG…AVDASIPEPE (195 aa). Residues 19–26 are G1; that stretch reads GHVDHGKT. 19–26 is a GTP binding site; sequence GHVDHGKT. Threonine 26 contributes to the Mg(2+) binding site. Positions 60 to 64 are G2; it reads GITIN. The G3 stretch occupies residues 81–84; it reads DCPG. Residues 81 to 85 and 136 to 139 each bind GTP; these read DCPGH and NKCD. The segment at 136–139 is G4; that stretch reads NKCD. Residues 174–176 are G5; the sequence is SGL.

This sequence belongs to the TRAFAC class translation factor GTPase superfamily. Classic translation factor GTPase family. EF-Tu/EF-1A subfamily. In terms of assembly, monomer.

The protein resides in the cytoplasm. The enzyme catalyses GTP + H2O = GDP + phosphate + H(+). Its function is as follows. GTP hydrolase that promotes the GTP-dependent binding of aminoacyl-tRNA to the A-site of ribosomes during protein biosynthesis. The protein is Elongation factor Tu of Prochlorococcus marinus subsp. pastoris (strain CCMP1986 / NIES-2087 / MED4).